The following is a 308-amino-acid chain: D-alanine--D-alanine ligase (308 aa).

An ATP-grasp domain is found at 109–302 (KAAYAAAGLP…FGALCRWIVE (194 aa)). Position 136-186 (136-186 (MPPPYVIKPYNEGSSVGVYLVPEGAEAAPELADDLPDTLMVEAFVPGRELT)) interacts with ATP. Residues aspartate 253, glutamate 269, and asparagine 271 each contribute to the Mg(2+) site.

This sequence belongs to the D-alanine--D-alanine ligase family. The cofactor is Mg(2+). Mn(2+) serves as cofactor.

The protein localises to the cytoplasm. The catalysed reaction is 2 D-alanine + ATP = D-alanyl-D-alanine + ADP + phosphate + H(+). It participates in cell wall biogenesis; peptidoglycan biosynthesis. Its function is as follows. Cell wall formation. This chain is D-alanine--D-alanine ligase, found in Dinoroseobacter shibae (strain DSM 16493 / NCIMB 14021 / DFL 12).